A 905-amino-acid chain; its full sequence is DNA-directed RNA polymerase subunit Rpo1N (905 aa).

Residues C60, C63, C70, H73, C100, C103, C147, and C150 each coordinate Zn(2+). The Mg(2+) site is built by D461, D463, and D465.

Belongs to the RNA polymerase beta' chain family. Part of the RNA polymerase complex. Requires Mg(2+) as cofactor. The cofactor is Zn(2+).

Its subcellular location is the cytoplasm. The catalysed reaction is RNA(n) + a ribonucleoside 5'-triphosphate = RNA(n+1) + diphosphate. DNA-dependent RNA polymerase (RNAP) catalyzes the transcription of DNA into RNA using the four ribonucleoside triphosphates as substrates. Forms the clamp head domain. The chain is DNA-directed RNA polymerase subunit Rpo1N from Thermococcus celer.